Here is a 95-residue protein sequence, read N- to C-terminus: Co-chaperonin GroES (95 aa).

This sequence belongs to the GroES chaperonin family. As to quaternary structure, heptamer of 7 subunits arranged in a ring. Interacts with the chaperonin GroEL.

It is found in the cytoplasm. In terms of biological role, together with the chaperonin GroEL, plays an essential role in assisting protein folding. The GroEL-GroES system forms a nano-cage that allows encapsulation of the non-native substrate proteins and provides a physical environment optimized to promote and accelerate protein folding. GroES binds to the apical surface of the GroEL ring, thereby capping the opening of the GroEL channel. This is Co-chaperonin GroES from Neisseria meningitidis serogroup C (strain 053442).